The following is a 470-amino-acid chain: E3 ubiquitin-protein ligase TRIM21 (470 aa).

The RING-type zinc-finger motif lies at 20 to 59 (CSICLDPMVEPMSIECGHCFCKECIFEVGKNGGSSCPECR). 4 residues coordinate Zn(2+): C96, H99, C118, and H124. A B box-type zinc finger spans residues 96–127 (CMKHGEKLHLFCEEDGQALCWVCAQSGKHRDH). Positions 188 to 250 (LQNSLLAQEE…RGSELELLQE (63 aa)) form a coiled coil. Positions 272–470 (DLTSTCPVPG…APLKLCPLKM (199 aa)) constitute a B30.2/SPRY domain.

This sequence belongs to the TRIM/RBCC family. As to quaternary structure, homotrimer. Component of a SCF(SKP2)-like complex containing CUL1, SKP1, TRIM21 and SKP2. Interacts with CALR, CUL1, FBXW11, HSPA5, IKBKB, IRF3, SKP1 and VCP. Interacts with SKP2; the interaction with SKP2 does not depend on an intact F-box domain. Interacts (via N-terminus and C-terminus) with DCP2 (via N-terminus and C-terminus). Interacts (via C-terminus) with IRF8 (via C-terminus). Interacts with ULK1, BECN1 and with ATG8 family members, including GABARAP, GABARAPL1, GABARAPL2 and MAP1LC3C/LC3C. Interacts with TRIM21 and SQSTM1/sequestosome 1. Interacts with IRF3. Interacts (via the SPRY domain) with NMI (via coiled-coil domain); the interaction promotes 'Lys-63'-linked ubiquitination of NMI. Interacts with IFI35 and NMI; the interaction facilitates NMI-IFI35 complex formation. Post-translationally, autoubiquitinated; does not lead to its proteasomal degradation. Deubiquitinated by USP4; leading to its stabilization. Autoubiquitinated.

It localises to the cytoplasm. The protein resides in the cytoplasmic vesicle. The protein localises to the autophagosome. Its subcellular location is the nucleus. It is found in the P-body. It localises to the stress granule. The catalysed reaction is S-ubiquitinyl-[E2 ubiquitin-conjugating enzyme]-L-cysteine + [acceptor protein]-L-lysine = [E2 ubiquitin-conjugating enzyme]-L-cysteine + N(6)-ubiquitinyl-[acceptor protein]-L-lysine.. The protein operates within protein modification; protein ubiquitination. Functionally, E3 ubiquitin-protein ligase whose activity is dependent on E2 enzymes, UBE2D1, UBE2D2, UBE2E1 and UBE2E2. Forms a ubiquitin ligase complex in cooperation with the E2 UBE2D2 that is used not only for the ubiquitination of USP4 and IKBKB but also for its self-ubiquitination. Component of cullin-RING-based SCF (SKP1-CUL1-F-box protein) E3 ubiquitin-protein ligase complexes such as SCF(SKP2)-like complexes. A TRIM21-containing SCF(SKP2)-like complex is shown to mediate ubiquitination of CDKN1B ('Thr-187' phosphorylated-form), thereby promoting its degradation by the proteasome. Monoubiquitinates IKBKB that will negatively regulates Tax-induced NF-kappa-B signaling. Negatively regulates IFN-beta production post-pathogen recognition by catalyzing polyubiquitin-mediated degradation of IRF3. Mediates the ubiquitin-mediated proteasomal degradation of IgG1 heavy chain, which is linked to the VCP-mediated ER-associated degradation (ERAD) pathway. Promotes IRF8 ubiquitination, which enhanced the ability of IRF8 to stimulate cytokine genes transcription in macrophages. Plays a role in the regulation of the cell cycle progression. Enhances the decapping activity of DCP2. Exists as a ribonucleoprotein particle present in all mammalian cells studied and composed of a single polypeptide and one of four small RNA molecules. At least two isoforms are present in nucleated and red blood cells, and tissue specific differences in RO/SSA proteins have been identified. The common feature of these proteins is their ability to bind HY RNAs.2. Involved in the regulation of innate immunity and the inflammatory response in response to IFNG/IFN-gamma. Organizes autophagic machinery by serving as a platform for the assembly of ULK1, Beclin 1/BECN1 and ATG8 family members and recognizes specific autophagy targets, thus coordinating target recognition with assembly of the autophagic apparatus and initiation of autophagy. Also regulates autophagy through FIP200/RB1CC1 ubiquitination and subsequent decreased protein stability. Represses the innate antiviral response by facilitating the formation of the NMI-IFI35 complex through 'Lys-63'-linked ubiquitination of NMI. During viral infection, promotes cell pyroptosis by mediating 'Lys-6'-linked ubiquitination of ISG12a/IFI27, facilitating its translocation into the mitochondria and subsequent CASP3 activation. When up-regulated through the IFN/JAK/STAT signaling pathway, promotes 'Lys-27'-linked ubiquitination of MAVS, leading to the recruitment of TBK1 and up-regulation of innate immunity. Mediates 'Lys-63'-linked polyubiquitination of G3BP1 in response to heat shock, leading to stress granule disassembly. The sequence is that of E3 ubiquitin-protein ligase TRIM21 (Trim21) from Mus musculus (Mouse).